Here is a 99-residue protein sequence, read N- to C-terminus: Small ribosomal subunit protein bS20 (99 aa).

This sequence belongs to the bacterial ribosomal protein bS20 family.

Functionally, binds directly to 16S ribosomal RNA. This Thermomicrobium roseum (strain ATCC 27502 / DSM 5159 / P-2) protein is Small ribosomal subunit protein bS20.